A 69-amino-acid chain; its full sequence is uncharacterized protein (69 aa).

This is an uncharacterized protein from Salmonella paratyphi A (strain ATCC 9150 / SARB42).